The following is a 239-amino-acid chain: uncharacterized protein (239 aa).

The region spanning 1–65 (MRLDKLLANS…DYREFIYLMM (65 aa)) is the S4 RNA-binding domain. Catalysis depends on Asp103, which acts as the Nucleophile.

It belongs to the pseudouridine synthase RsuA family.

It catalyses the reaction a uridine in RNA = a pseudouridine in RNA. This is an uncharacterized protein from Bacillus subtilis (strain 168).